Reading from the N-terminus, the 146-residue chain is Hemoglobin subunit beta (146 aa).

N-acetylvaline is present on Val-1. A Globin domain is found at 2 to 146; sequence HLTPEEKTAV…VANALAHKYH (145 aa). Thr-12 bears the Phosphothreonine mark. Residue Ser-44 is modified to Phosphoserine. N6-acetyllysine is present on Lys-59. His-63 contributes to the heme b binding site. Lys-82 is modified (N6-acetyllysine). His-92 contributes to the heme b binding site. Residue Cys-93 is modified to S-nitrosocysteine. At Lys-144 the chain carries N6-acetyllysine.

This sequence belongs to the globin family. As to quaternary structure, heterotetramer of two alpha chains and two beta chains. Red blood cells.

In terms of biological role, involved in oxygen transport from the lung to the various peripheral tissues. In Mandrillus sphinx (Mandrill), this protein is Hemoglobin subunit beta (HBB).